Consider the following 567-residue polypeptide: Hexose transporter HXT11 (567 aa).

Over residues 1–22 (MSGVNNTSANELSTTMSNSNSA) the composition is skewed to polar residues. The interval 1 to 45 (MSGVNNTSANELSTTMSNSNSAVGAPSVKTEHGDSKNSLNLDANE) is disordered. Topologically, residues 1–56 (MSGVNNTSANELSTTMSNSNSAVGAPSVKTEHGDSKNSLNLDANEPPIDLPQKPLS) are cytoplasmic. Residues 57–77 (AYTTVAILCLMIAFGGFIFGW) form a helical membrane-spanning segment. Residues 78-112 (DTGTISGFVNLSDFIRRFGQKNDKGTYYLSKVRMG) are Extracellular-facing. N87 carries an N-linked (GlcNAc...) asparagine glycan. Residues 113–133 (LIVSIFNIGCAIGGIVLSKVG) form a helical membrane-spanning segment. Residues 134–139 (DIYGRR) lie on the Cytoplasmic side of the membrane. A helical membrane pass occupies residues 140-160 (IGLITVTAIYVVGILIQITSI). Residues 161-170 (NKWYQYFIGR) are Extracellular-facing. Residues 171–191 (IISGLGVGGIAVLSPMLISEV) traverse the membrane as a helical segment. Residues 192–197 (APKHIR) are Cytoplasmic-facing. Residues 198-218 (GTLVQLYQLMGTMGIFLGYCT) form a helical membrane-spanning segment. Residues 219–232 (NYGTKNYHNATQWR) lie on the Extracellular side of the membrane. Residue N227 is glycosylated (N-linked (GlcNAc...) asparagine). Residues 233 to 253 (VGLGLCFAWATFMVSGMMFVP) form a helical membrane-spanning segment. Topologically, residues 254 to 336 (ESPRYLIEVG…IQSLQQLTGD (83 aa)) are cytoplasmic. Residues 337 to 353 (NYFFYYGTTIFKSVGLK) traverse the membrane as a helical segment. Residues 354–359 (DSFQTS) lie on the Extracellular side of the membrane. Residues 360-377 (IIIGVVNFFSSFIAVYTI) traverse the membrane as a helical segment. The Cytoplasmic portion of the chain corresponds to 378–384 (ERFGRRT). Residues 385–405 (CLLWGAASMLCCFAVFASVGV) traverse the membrane as a helical segment. The Extracellular portion of the chain corresponds to 406 to 429 (TKLWPQGSSHQDITSQGAGNCMIV). A helical transmembrane segment spans residues 430–450 (FTMFFIFSFATTWAGGCYVIV). The Cytoplasmic portion of the chain corresponds to 451-467 (SETFPLRVKSRGMAIAT). The helical transmembrane segment at 468–488 (AANWMWGFLISFFTPFITGAI) threads the bilayer. Residue N489 is a topological domain, extracellular. The helical transmembrane segment at 490 to 510 (FYYGYVFLGCLVFAYFYVFFF) threads the bilayer. Topologically, residues 511–567 (VPETKGLTLEEVNTMWLEGVPAWKSASWVPPERRTADYDADAIDHDNRPIYKRFFSS) are cytoplasmic.

Belongs to the major facilitator superfamily. Sugar transporter (TC 2.A.1.1) family.

The protein resides in the membrane. In terms of biological role, probable glucose transporter. In Saccharomyces cerevisiae (strain ATCC 204508 / S288c) (Baker's yeast), this protein is Hexose transporter HXT11 (HXT11).